The following is a 255-amino-acid chain: Major prion protein (255 aa).

The first 24 residues, 1–24 (MVKSHIGSWILVLFVAMWSDVGLC), serve as a signal peptide directing secretion. The segment at 25 to 41 (KKRPKPGGGWNTGGSRY) is interaction with ADGRG6. The segment at 25-232 (KKRPKPGGGW…ESEAYYQRGA (208 aa)) is interaction with GRB2, ERI3 and SYN1. A disordered region spans residues 28–110 (PKPGGGWNTG…QWNKPSKPKT (83 aa)). Tandem repeats lie at residues 54-62 (PQGGGGWGQ), 63-70 (PHGGGWGQ), 71-78 (PHGGGWGQ), 79-86 (PHGGGWGQ), and 87-94 (PHGGGGWG). Positions 54–94 (PQGGGGWGQPHGGGWGQPHGGGWGQPHGGGWGQPHGGGGWG) are 5 X 8 AA tandem repeats of P-H-G-G-G-W-G-Q. Gly residues predominate over residues 55–97 (QGGGGWGQPHGGGWGQPHGGGWGQPHGGGWGQPHGGGGWGQGG). Positions 64, 65, 66, 72, 73, 74, 80, 81, 82, 88, 90, and 91 each coordinate Cu(2+). N-linked (GlcNAc...) asparagine glycans are attached at residues asparagine 174, asparagine 184, and asparagine 199. Cysteine 182 and cysteine 216 form a disulfide bridge. Residue alanine 232 is the site of GPI-anchor amidated alanine attachment. Positions 233–255 (SVILFSSPPVILLVSFLIFLIVG) are cleaved as a propeptide — removed in mature form.

Belongs to the prion family. Monomer and homodimer. Has a tendency to aggregate into amyloid fibrils containing a cross-beta spine, formed by a steric zipper of superposed beta-strands. Soluble oligomers may represent an intermediate stage on the path to fibril formation. Copper binding may promote oligomerization. Interacts with GRB2, APP, ERI3/PRNPIP and SYN1. Mislocalized cytosolically exposed PrP interacts with MGRN1; this interaction alters MGRN1 subcellular location and causes lysosomal enlargement. Interacts with APP. Interacts with KIAA1191. Interacts with ADGRG6.

The protein resides in the cell membrane. It localises to the golgi apparatus. Its function is as follows. Its primary physiological function is unclear. May play a role in neuronal development and synaptic plasticity. May be required for neuronal myelin sheath maintenance. May promote myelin homeostasis through acting as an agonist for ADGRG6 receptor. May play a role in iron uptake and iron homeostasis. Soluble oligomers are toxic to cultured neuroblastoma cells and induce apoptosis (in vitro). Association with GPC1 (via its heparan sulfate chains) targets PRNP to lipid rafts. Also provides Cu(2+) or Zn(2+) for the ascorbate-mediated GPC1 deaminase degradation of its heparan sulfate side chains. The chain is Major prion protein (PRNP) from Canis lupus familiaris (Dog).